The sequence spans 327 residues: 4-hydroxyproline 2-epimerase (327 aa).

C85 serves as the catalytic Proton acceptor. Substrate is bound by residues 86–87, H205, and D231; that span reads GH. The active-site Proton donor is C235. 236–237 contributes to the substrate binding site; the sequence is GT.

The protein belongs to the proline racemase family.

The enzyme catalyses trans-4-hydroxy-L-proline = cis-4-hydroxy-D-proline. In terms of biological role, catalyzes the epimerization of trans-4-hydroxy-L-proline (t4LHyp) to cis-4-hydroxy-D-proline (c4DHyp). Displays no proline racemase activity. This chain is 4-hydroxyproline 2-epimerase, found in Roseibium alexandrii (strain DSM 17067 / NCIMB 14079 / DFL-11) (Labrenzia alexandrii).